The chain runs to 110 residues: Large ribosomal subunit protein uL22 (110 aa).

Belongs to the universal ribosomal protein uL22 family. In terms of assembly, part of the 50S ribosomal subunit.

In terms of biological role, this protein binds specifically to 23S rRNA; its binding is stimulated by other ribosomal proteins, e.g. L4, L17, and L20. It is important during the early stages of 50S assembly. It makes multiple contacts with different domains of the 23S rRNA in the assembled 50S subunit and ribosome. Its function is as follows. The globular domain of the protein is located near the polypeptide exit tunnel on the outside of the subunit, while an extended beta-hairpin is found that lines the wall of the exit tunnel in the center of the 70S ribosome. This chain is Large ribosomal subunit protein uL22, found in Pseudoalteromonas translucida (strain TAC 125).